The following is a 143-amino-acid chain: ATP synthase F(0) complex subunit C2, mitochondrial (143 aa).

The N-terminal 68 residues, 1 to 68 (MYTCAKFVST…RSFQTSAISR (68 aa)), are a transit peptide targeting the mitochondrion. Residues 84-104 (VGVAGSGAGIGTVFGSLIIGY) traverse the membrane as a helical segment. Lys-111 carries the N6,N6,N6-trimethyllysine modification. Residues 119–139 (ILGFALSEAMGLFCLMVAFLI) form a helical membrane-spanning segment.

This sequence belongs to the ATPase C chain family. F-type ATPases have 2 components, CF(1) - the catalytic core - and CF(0) - the membrane proton channel. CF(1) has five subunits: alpha(3), beta(3), gamma(1), delta(1), epsilon(1). CF(0) has three main subunits: a, b and c. Interacts with DNAJC30; interaction is direct. In terms of processing, trimethylated by ATPSCKMT at Lys-111. Methylation is required for proper incorporation of the C subunit into the ATP synthase complex and mitochondrial respiration.

The protein resides in the mitochondrion membrane. Functionally, mitochondrial membrane ATP synthase (F(1)F(0) ATP synthase or Complex V) produces ATP from ADP in the presence of a proton gradient across the membrane which is generated by electron transport complexes of the respiratory chain. F-type ATPases consist of two structural domains, F(1) - containing the extramembraneous catalytic core and F(0) - containing the membrane proton channel, linked together by a central stalk and a peripheral stalk. During catalysis, ATP synthesis in the catalytic domain of F(1) is coupled via a rotary mechanism of the central stalk subunits to proton translocation. Part of the complex F(0) domain. A homomeric c-ring of probably 10 subunits is part of the complex rotary element. The sequence is that of ATP synthase F(0) complex subunit C2, mitochondrial from Bos taurus (Bovine).